The primary structure comprises 189 residues: HGPRTase-like protein 2 (189 aa).

The protein belongs to the purine/pyrimidine phosphoribosyltransferase family. Archaeal HPRT subfamily.

In terms of biological role, may catalyze a purine salvage reaction, the substrate is unknown. The polypeptide is HGPRTase-like protein 2 (Haloarcula marismortui (strain ATCC 43049 / DSM 3752 / JCM 8966 / VKM B-1809) (Halobacterium marismortui)).